The chain runs to 376 residues: Probable dual-specificity RNA methyltransferase RlmN (376 aa).

A disordered region spans residues 1–25; sequence MSDSERTSLPLVFDEPRGRKKPPRH. Glu113 functions as the Proton acceptor in the catalytic mechanism. One can recognise a Radical SAM core domain in the interval 119 to 362; it reads YPDRATMCVS…PTTVRDTRGR (244 aa). A disulfide bridge links Cys126 with Cys368. 3 residues coordinate [4Fe-4S] cluster: Cys133, Cys137, and Cys140. Residues 188 to 189, Ser222, 245 to 247, and Asn325 each bind S-adenosyl-L-methionine; these read GE and SLH. Cys368 (S-methylcysteine intermediate) is an active-site residue.

It belongs to the radical SAM superfamily. RlmN family. It depends on [4Fe-4S] cluster as a cofactor.

The protein localises to the cytoplasm. It carries out the reaction adenosine(2503) in 23S rRNA + 2 reduced [2Fe-2S]-[ferredoxin] + 2 S-adenosyl-L-methionine = 2-methyladenosine(2503) in 23S rRNA + 5'-deoxyadenosine + L-methionine + 2 oxidized [2Fe-2S]-[ferredoxin] + S-adenosyl-L-homocysteine. The catalysed reaction is adenosine(37) in tRNA + 2 reduced [2Fe-2S]-[ferredoxin] + 2 S-adenosyl-L-methionine = 2-methyladenosine(37) in tRNA + 5'-deoxyadenosine + L-methionine + 2 oxidized [2Fe-2S]-[ferredoxin] + S-adenosyl-L-homocysteine. In terms of biological role, specifically methylates position 2 of adenine 2503 in 23S rRNA and position 2 of adenine 37 in tRNAs. This is Probable dual-specificity RNA methyltransferase RlmN from Nocardioides sp. (strain ATCC BAA-499 / JS614).